A 531-amino-acid polypeptide reads, in one-letter code: tRNA(Ile)-lysidine synthase (531 aa).

32–37 (SGGMDS) serves as a coordination point for ATP.

It belongs to the tRNA(Ile)-lysidine synthase family.

Its subcellular location is the cytoplasm. It carries out the reaction cytidine(34) in tRNA(Ile2) + L-lysine + ATP = lysidine(34) in tRNA(Ile2) + AMP + diphosphate + H(+). Its function is as follows. Ligates lysine onto the cytidine present at position 34 of the AUA codon-specific tRNA(Ile) that contains the anticodon CAU, in an ATP-dependent manner. Cytidine is converted to lysidine, thus changing the amino acid specificity of the tRNA from methionine to isoleucine. This is tRNA(Ile)-lysidine synthase from Blochmanniella floridana.